Reading from the N-terminus, the 420-residue chain is Cytochrome c biogenesis protein Ccs1 (420 aa).

Transmembrane regions (helical) follow at residues 12–32, 71–91, and 157–177; these read LRFS…GTVI, TWWF…CTFL, and IAPI…IVGS.

This sequence belongs to the Ccs1/CcsB family. As to quaternary structure, may interact with CcsA.

The protein resides in the plastid. Its subcellular location is the chloroplast thylakoid membrane. Its function is as follows. Required during biogenesis of c-type cytochromes (cytochrome c6 and cytochrome f) at the step of heme attachment. The chain is Cytochrome c biogenesis protein Ccs1 from Phaeodactylum tricornutum (strain CCAP 1055/1).